The following is a 406-amino-acid chain: DNA-binding transcriptional repressor Mlc (406 aa).

The H-T-H motif DNA-binding region spans R33–L42. H247, C257, C259, and C264 together coordinate Zn(2+).

This sequence belongs to the ROK (NagC/XylR) family. As to quaternary structure, homodimer. Homotetramer. There is probably an equilibrium between the dimeric and the tetrameric form. Interacts with dephosphorylated PtsG. Mlc and PtsG EIIB domain form a complex with the 1:1 stoichiometry. Interacts with MtfA.

The protein localises to the cytoplasm. Activity is modulated by glucose. In the presence of glucose, is inhibited by interaction with the dephosphorylated form of PtsG, which sequesters Mlc in the inner membrane and prevents Mlc binding to its target promoters. The restriction of conformational freedom resulting from the anchoring of four ends of Mlc to the membrane could be the primary cause of its loss of DNA-binding activity in vivo. Activity is also inhibited by interaction with the Mlc titration factor A (mtfA). The inactivation mechanisms of Mlc by dephosphorylated PtsG and MtfA differ significantly. Functionally, global regulator of carbohydrate metabolism. Represses the expression of several genes involved in sugar transport and utilization, in particular phosphoenolpyruvate-carbohydrate phosphotransferase system (PTS) genes. Represses expression of ptsG (EIICB(Glc)), which encodes the PTS system glucose-specific EIICB component. Also represses the expression of the manXYZ operon, encoding the mannose-specific PTS system, expression of malT, encoding the transcriptional activator of the maltose regulon, and expression of the pts operon, composed of the genes ptsH, ptsI and crr. Represses its own expression. Acts by binding to the regulatory region of the target genes. The sequence is that of DNA-binding transcriptional repressor Mlc from Escherichia coli (strain K12).